The sequence spans 1005 residues: Protein TIC 214 (1005 aa).

6 helical membrane-spanning segments follow: residues 25 to 45, 67 to 87, 91 to 111, 131 to 151, 177 to 197, and 304 to 324; these read VGLY…LFLL, FFTG…HLAL, HTIL…SNSG, SFQL…SVLG, FVGW…VFVW, and LFSI…PLLY. 2 disordered regions span residues 457–481 and 767–833; these read VEEG…EREE and KKKK…KRKQ. The segment covering 783–810 has biased composition (basic residues); it reads KQKKVKSKQKKVKSKQKKVKSKQKKVKS. The span at 811 to 824 shows a compositional bias: basic and acidic residues; it reads KQNEIKSKQNEIKS.

Belongs to the TIC214 family. Part of the Tic complex.

The protein localises to the plastid. It is found in the chloroplast inner membrane. Functionally, involved in protein precursor import into chloroplasts. May be part of an intermediate translocation complex acting as a protein-conducting channel at the inner envelope. This Oenothera berteroana (Bertero's evening primrose) protein is Protein TIC 214.